The chain runs to 490 residues: Betaine aldehyde dehydrogenase (490 aa).

K(+) is bound by residues Thr26, Ile27, and Asp93. An NAD(+)-binding site is contributed by 150-152 (GAW). The active-site Charge relay system is Lys162. 176 to 179 (KPSE) serves as a coordination point for NAD(+). Residue Val180 participates in K(+) binding. 230-233 (GVAS) contributes to the NAD(+) binding site. K(+) is bound at residue Leu246. The active-site Proton acceptor is the Glu252. NAD(+)-binding residues include Gly254, Cys286, and Glu387. The active-site Nucleophile is the Cys286. At Cys286 the chain carries Cysteine sulfenic acid (-SOH). Positions 457 and 460 each coordinate K(+). The active-site Charge relay system is the Glu464.

The protein belongs to the aldehyde dehydrogenase family. As to quaternary structure, dimer of dimers. It depends on K(+) as a cofactor.

The enzyme catalyses betaine aldehyde + NAD(+) + H2O = glycine betaine + NADH + 2 H(+). It functions in the pathway amine and polyamine biosynthesis; betaine biosynthesis via choline pathway; betaine from betaine aldehyde: step 1/1. Its function is as follows. Involved in the biosynthesis of the osmoprotectant glycine betaine. Catalyzes the irreversible oxidation of betaine aldehyde to the corresponding acid. The chain is Betaine aldehyde dehydrogenase from Escherichia coli O8 (strain IAI1).